The chain runs to 173 residues: Insertion element IS1397 uncharacterized 20.1 kDa protein (173 aa).

Positions 115 to 135 (KSMTRSDDTHENEANMTPEEM) are disordered.

It belongs to the IS150/IS1296 orfA family.

This chain is Insertion element IS1397 uncharacterized 20.1 kDa protein, found in Escherichia coli.